Consider the following 50-residue polypeptide: Sperm protamine P1 (50 aa).

Cystine bridges form between C7–C15 and C39–C47.

The protein belongs to the protamine P1 family. Cross-linked by interchain disulfide bonds around the DNA-helix. Testis.

It localises to the nucleus. The protein resides in the chromosome. Its function is as follows. Protamines substitute for histones in the chromatin of sperm during the haploid phase of spermatogenesis. They compact sperm DNA into a highly condensed, stable and inactive complex. This Sus scrofa (Pig) protein is Sperm protamine P1 (PRM1).